The sequence spans 422 residues: Probable isoprenylcysteine alpha-carbonyl methylesterase ICMEL2 (422 aa).

Over residues 1-16 (MQLSPERCRPMSENRE) the composition is skewed to basic and acidic residues. The interval 1 to 55 (MQLSPERCRPMSENREAWSANSEEMELLHGSNRLSSPEHVRRRVSGNSSEDGSPR) is disordered. Transmembrane regions (helical) follow at residues 97-117 (LLAL…VAYL) and 152-172 (VVVF…GSLL). Substrate-binding positions include 158–160 (GGA) and 229–231 (QSA). Active-site residues include serine 230, aspartate 331, and histidine 363.

This sequence belongs to the AB hydrolase superfamily. Isoprenylcysteine methylesterase family. As to expression, expressed at low levels in flowers and siliques.

It localises to the endoplasmic reticulum membrane. It is found in the golgi apparatus membrane. It catalyses the reaction [protein]-C-terminal S-[(2E,6E)-farnesyl]-L-cysteine methyl ester + H2O = [protein]-C-terminal S-[(2E,6E)-farnesyl]-L-cysteine + methanol + H(+). Its function is as follows. Catalyzes the demethylation of isoprenylcysteine methylesters. May act as a negative regulator of ABA signaling. This is Probable isoprenylcysteine alpha-carbonyl methylesterase ICMEL2 from Arabidopsis thaliana (Mouse-ear cress).